The sequence spans 63 residues: Large ribosomal subunit protein uL30 (63 aa).

This sequence belongs to the universal ribosomal protein uL30 family. Part of the 50S ribosomal subunit.

This Xanthomonas campestris pv. campestris (strain 8004) protein is Large ribosomal subunit protein uL30.